The following is a 334-amino-acid chain: Glyceraldehyde-3-phosphate dehydrogenase 1 (334 aa).

NAD(+) contacts are provided by residues 11–12 (RI), Asp33, Arg77, and Ser119. Residues 150–152 (SCT) and Thr181 contribute to the D-glyceraldehyde 3-phosphate site. The active-site Nucleophile is the Cys151. An NAD(+)-binding site is contributed by Asn182. D-glyceraldehyde 3-phosphate contacts are provided by residues Arg196, 209-210 (TG), and Arg232. An NAD(+)-binding site is contributed by Asn314.

It belongs to the glyceraldehyde-3-phosphate dehydrogenase family. As to quaternary structure, homotetramer.

The protein localises to the cytoplasm. It catalyses the reaction D-glyceraldehyde 3-phosphate + phosphate + NAD(+) = (2R)-3-phospho-glyceroyl phosphate + NADH + H(+). Its pathway is carbohydrate degradation; glycolysis; pyruvate from D-glyceraldehyde 3-phosphate: step 1/5. Its function is as follows. Catalyzes the oxidative phosphorylation of glyceraldehyde 3-phosphate (G3P) to 1,3-bisphosphoglycerate (BPG) using the cofactor NAD. The first reaction step involves the formation of a hemiacetal intermediate between G3P and a cysteine residue, and this hemiacetal intermediate is then oxidized to a thioester, with concomitant reduction of NAD to NADH. The reduced NADH is then exchanged with the second NAD, and the thioester is attacked by a nucleophilic inorganic phosphate to produce BPG. In Bacillus cereus, this protein is Glyceraldehyde-3-phosphate dehydrogenase 1 (gap1).